A 260-amino-acid chain; its full sequence is Phosphate import ATP-binding protein PstB (260 aa).

The 242-residue stretch at 14 to 255 folds into the ABC transporter domain; sequence IETENLNLFY…PKNTKTEEYI (242 aa). An ATP-binding site is contributed by 46–53; that stretch reads GPSGCGKS.

The protein belongs to the ABC transporter superfamily. Phosphate importer (TC 3.A.1.7) family. The complex is composed of two ATP-binding proteins (PstB), two transmembrane proteins (PstC and PstA) and a solute-binding protein (PstS).

It is found in the cell inner membrane. The catalysed reaction is phosphate(out) + ATP + H2O = ADP + 2 phosphate(in) + H(+). Its function is as follows. Part of the ABC transporter complex PstSACB involved in phosphate import. Responsible for energy coupling to the transport system. This Borreliella afzelii (strain PKo) (Borrelia afzelii) protein is Phosphate import ATP-binding protein PstB.